Reading from the N-terminus, the 599-residue chain is Calmodulin-binding protein 60 E (599 aa).

The tract at residues 1–21 (MNKRGYECSQEDTDKLPESKR) is disordered. A calmodulin-binding region spans residues 1–80 (MNKRGYECSQ…LTSRSPEPKR (80 aa)). The interval 150–273 (EDDEDWTREH…VLHKKLLKAN (124 aa)) is DNA-binding.

Belongs to the plant ACBP60 protein family. As to quaternary structure, interacts with calmodulin (CaM).

The protein resides in the nucleus. Its function is as follows. Transcription activator that binds DNA in a sequence-specific manner, likely 5'-GAAATTTTGG-3', to promote the expression of target genes. This Arabidopsis thaliana (Mouse-ear cress) protein is Calmodulin-binding protein 60 E.